The following is a 307-amino-acid chain: Mycothiol acetyltransferase (307 aa).

N-acetyltransferase domains lie at 12-157 (TRTD…PPLP) and 160-307 (VTLR…YQLG). Position 43 (E43) interacts with 1D-myo-inositol 2-(L-cysteinylamino)-2-deoxy-alpha-D-glucopyranoside. Acetyl-CoA is bound at residue 87-89 (LAV). E187, K227, and E239 together coordinate 1D-myo-inositol 2-(L-cysteinylamino)-2-deoxy-alpha-D-glucopyranoside. Acetyl-CoA is bound by residues 243–245 (LGV) and 250–256 (HGGGLGK). 1D-myo-inositol 2-(L-cysteinylamino)-2-deoxy-alpha-D-glucopyranoside is bound at residue Y278.

The protein belongs to the acetyltransferase family. MshD subfamily. As to quaternary structure, monomer.

The enzyme catalyses 1D-myo-inositol 2-(L-cysteinylamino)-2-deoxy-alpha-D-glucopyranoside + acetyl-CoA = mycothiol + CoA + H(+). In terms of biological role, catalyzes the transfer of acetyl from acetyl-CoA to desacetylmycothiol (Cys-GlcN-Ins) to form mycothiol. The protein is Mycothiol acetyltransferase of Salinispora tropica (strain ATCC BAA-916 / DSM 44818 / JCM 13857 / NBRC 105044 / CNB-440).